The sequence spans 637 residues: Chaperone protein HtpG (637 aa).

Residues methionine 1–arginine 345 are a; substrate-binding. A b region spans residues glutamate 346–lysine 562. Residues leucine 563–lysine 637 are c.

This sequence belongs to the heat shock protein 90 family. Homodimer.

The protein resides in the cytoplasm. Molecular chaperone. Has ATPase activity. This Shewanella putrefaciens (strain CN-32 / ATCC BAA-453) protein is Chaperone protein HtpG.